The chain runs to 77 residues: UPF0346 protein lin1971 (77 aa).

The protein belongs to the UPF0346 family.

This is UPF0346 protein lin1971 from Listeria innocua serovar 6a (strain ATCC BAA-680 / CLIP 11262).